Reading from the N-terminus, the 185-residue chain is Elongation factor P (185 aa).

The protein belongs to the elongation factor P family.

It localises to the cytoplasm. It functions in the pathway protein biosynthesis; polypeptide chain elongation. In terms of biological role, involved in peptide bond synthesis. Stimulates efficient translation and peptide-bond synthesis on native or reconstituted 70S ribosomes in vitro. Probably functions indirectly by altering the affinity of the ribosome for aminoacyl-tRNA, thus increasing their reactivity as acceptors for peptidyl transferase. This chain is Elongation factor P (efp), found in Lactococcus lactis subsp. lactis (strain IL1403) (Streptococcus lactis).